A 314-amino-acid chain; its full sequence is Thymidylate synthase (314 aa).

DUMP contacts are provided by residues arginine 21 and 176–177 (RR). The active-site Nucleophile is cysteine 196. DUMP contacts are provided by residues 216-219 (RSAD), asparagine 227, and 257-259 (HLY). Aspartate 219 lines the (6R)-5,10-methylene-5,6,7,8-tetrahydrofolate pocket. Serine 313 contacts (6R)-5,10-methylene-5,6,7,8-tetrahydrofolate.

The protein belongs to the thymidylate synthase family. Bacterial-type ThyA subfamily. As to quaternary structure, homodimer.

Its subcellular location is the cytoplasm. The catalysed reaction is dUMP + (6R)-5,10-methylene-5,6,7,8-tetrahydrofolate = 7,8-dihydrofolate + dTMP. It functions in the pathway pyrimidine metabolism; dTTP biosynthesis. Functionally, catalyzes the reductive methylation of 2'-deoxyuridine-5'-monophosphate (dUMP) to 2'-deoxythymidine-5'-monophosphate (dTMP) while utilizing 5,10-methylenetetrahydrofolate (mTHF) as the methyl donor and reductant in the reaction, yielding dihydrofolate (DHF) as a by-product. This enzymatic reaction provides an intracellular de novo source of dTMP, an essential precursor for DNA biosynthesis. In Listeria monocytogenes serovar 1/2a (strain ATCC BAA-679 / EGD-e), this protein is Thymidylate synthase.